The sequence spans 380 residues: Dual-specificity RNA methyltransferase RlmN (380 aa).

The active-site Proton acceptor is Glu94. One can recognise a Radical SAM core domain in the interval 100-339; that stretch reads DGDRATLCVS…VTVRKTRGDD (240 aa). The cysteines at positions 107 and 344 are disulfide-linked. [4Fe-4S] cluster-binding residues include Cys114, Cys118, and Cys121. S-adenosyl-L-methionine-binding positions include 168-169, Ser200, 222-224, and Asn301; these read GE and SLH. The active-site S-methylcysteine intermediate is the Cys344.

The protein belongs to the radical SAM superfamily. RlmN family. The cofactor is [4Fe-4S] cluster.

It is found in the cytoplasm. It carries out the reaction adenosine(2503) in 23S rRNA + 2 reduced [2Fe-2S]-[ferredoxin] + 2 S-adenosyl-L-methionine = 2-methyladenosine(2503) in 23S rRNA + 5'-deoxyadenosine + L-methionine + 2 oxidized [2Fe-2S]-[ferredoxin] + S-adenosyl-L-homocysteine. The catalysed reaction is adenosine(37) in tRNA + 2 reduced [2Fe-2S]-[ferredoxin] + 2 S-adenosyl-L-methionine = 2-methyladenosine(37) in tRNA + 5'-deoxyadenosine + L-methionine + 2 oxidized [2Fe-2S]-[ferredoxin] + S-adenosyl-L-homocysteine. In terms of biological role, specifically methylates position 2 of adenine 2503 in 23S rRNA and position 2 of adenine 37 in tRNAs. m2A2503 modification seems to play a crucial role in the proofreading step occurring at the peptidyl transferase center and thus would serve to optimize ribosomal fidelity. In Vibrio atlanticus (strain LGP32) (Vibrio splendidus (strain Mel32)), this protein is Dual-specificity RNA methyltransferase RlmN.